Reading from the N-terminus, the 186-residue chain is Lipid A acyltransferase PagP (186 aa).

An N-terminal signal peptide occupies residues 1-19; that stretch reads MKRLISCLTIICALNRSAA. Active-site residues include H60, D103, and S104.

Belongs to the lipid A palmitoyltransferase family. As to quaternary structure, homodimer.

The protein resides in the cell outer membrane. The enzyme catalyses a lipid A + a 1,2-diacyl-sn-glycero-3-phosphocholine = a hepta-acyl lipid A + a 2-acyl-sn-glycero-3-phosphocholine. It catalyses the reaction a lipid IVA + a 1,2-diacyl-sn-glycero-3-phosphocholine = a lipid IVB + a 2-acyl-sn-glycero-3-phosphocholine. It carries out the reaction a lipid IIA + a 1,2-diacyl-sn-glycero-3-phosphocholine = a lipid IIB + a 2-acyl-sn-glycero-3-phosphocholine. Its function is as follows. Transfers a fatty acid residue from the sn-1 position of a phospholipid to the N-linked hydroxyfatty acid chain on the proximal unit of lipid A or its precursors. Confers resistance to cationic antimicrobial peptides (CAMPs). Promotes the ability of L.pneumophila to replicate and/or survive in macrophages. Important for ability to kill macrophages and to promote the virulence. This Legionella pneumophila protein is Lipid A acyltransferase PagP.